A 120-amino-acid chain; its full sequence is Ribosome-binding factor A (120 aa).

The protein belongs to the RbfA family. Monomer. Binds 30S ribosomal subunits, but not 50S ribosomal subunits or 70S ribosomes.

Its subcellular location is the cytoplasm. Its function is as follows. One of several proteins that assist in the late maturation steps of the functional core of the 30S ribosomal subunit. Associates with free 30S ribosomal subunits (but not with 30S subunits that are part of 70S ribosomes or polysomes). Required for efficient processing of 16S rRNA. May interact with the 5'-terminal helix region of 16S rRNA. This is Ribosome-binding factor A from Borreliella burgdorferi (strain ATCC 35210 / DSM 4680 / CIP 102532 / B31) (Borrelia burgdorferi).